Here is a 431-residue protein sequence, read N- to C-terminus: MTNYHFVGIKGTGMSALAQVLHEMNHQVQGSDIDKHIFTEDALRAKGIPFFPFSAENIKEDQVIIQGNAFGDDHPEIARAKELDLTIYHYYDFLGHLADEYRSVAITGSHGKTSTTGLLSHVLSGITPTAFLIGDGTGAGVAEAKAFVFEACEYKRHFLYYKPDYAIMTNIDFDHSDYFTGIDDVVSAFQEMAMQVKQAIVACGDDEHLQNLQANVPILYYGFGENNDFRAENATSTPDGTSFDVYLRDDFYGTFLIPGFGRHHVLNALSVIAICQYEGLNKEEVAARLSTFGGVKRRFSETNFGSQILVDDYAHHPKEISATIESARKKYPDREVVAIFQPHTYTRLKSFMDDFATSLREADATYLCEIFGSAREQEGQVRVEDLQDKVPGSDILTRDNVSILRKHENAVLLFMGAGDIQTYQHQYENAK.

Residue glycine 108–serine 114 participates in ATP binding.

This sequence belongs to the MurCDEF family.

Its subcellular location is the cytoplasm. The enzyme catalyses UDP-N-acetyl-alpha-D-muramate + L-alanine + ATP = UDP-N-acetyl-alpha-D-muramoyl-L-alanine + ADP + phosphate + H(+). The protein operates within cell wall biogenesis; peptidoglycan biosynthesis. Its function is as follows. Cell wall formation. This is UDP-N-acetylmuramate--L-alanine ligase from Exiguobacterium sibiricum (strain DSM 17290 / CCUG 55495 / CIP 109462 / JCM 13490 / 255-15).